Consider the following 154-residue polypeptide: MAARLYCQLDSSRDVLCLRPVGAESRGRPFSGPLGTLSSPSPSAVSSDHGAHLSLRGLPVCAFSSAGPCALRFTSARCMATTVNAHQILPKVLHKRTLGLPAMSTTDLEAYFKDCLFKDWEELGEEIRLKVFVLGGCRHKLVCAPSSCNFFTSA.

The segment at 68-117 (PCALRFTSARCMATTVNAHQILPKVLHKRTLGLPAMSTTDLEAYFKDCLF) is mitochondrial targeting sequence.

It belongs to the orthohepadnavirus protein X family. In terms of assembly, may form homodimer. May interact with host CEBPA, CFLAR, CREB1, DDB1, E4F1, HBXIP, HSPD1/HSP60, NFKBIA, POLR2E and SMAD4. Interacts with host SMC5-SMC6 complex and induces its degradation. Interacts with host TRPC4AP; leading to prevent ubiquitination of TRPC4AP. Interacts with host PLSCR1; this interaction promotes ubiquitination and degradation of HBx and impairs HBx-mediated cell proliferation. In terms of processing, a fraction may be phosphorylated in insect cells and HepG2 cells, a human hepatoblastoma cell line. Phosphorylated in vitro by host protein kinase C or mitogen-activated protein kinase. N-acetylated in insect cells.

It is found in the host cytoplasm. The protein resides in the host nucleus. It localises to the host mitochondrion. Functionally, multifunctional protein that plays a role in silencing host antiviral defenses and promoting viral transcription. Does not seem to be essential for HBV infection. May be directly involved in development of cirrhosis and liver cancer (hepatocellular carcinoma). Most of cytosolic activities involve modulation of cytosolic calcium. The effect on apoptosis is controversial depending on the cell types in which the studies have been conducted. May induce apoptosis by localizing in mitochondria and causing loss of mitochondrial membrane potential. May also modulate apoptosis by binding host CFLAR, a key regulator of the death-inducing signaling complex (DISC). Promotes viral transcription by using the host E3 ubiquitin ligase DDB1 to target the SMC5-SMC6 complex to proteasomal degradation. This host complex would otherwise bind to viral episomal DNA, and prevents its transcription. Moderately stimulates transcription of many different viral and cellular transcription elements. Promoters and enhancers stimulated by HBx contain DNA binding sites for NF-kappa-B, AP-1, AP-2, c-EBP, ATF/CREB, or the calcium-activated factor NF-AT. In Hepatitis B virus genotype A3 (isolate Cameroon/CMR983/1994) (HBV-A), this protein is Protein X.